The sequence spans 105 residues: UPF0473 protein SAK_2028 (105 aa).

The protein belongs to the UPF0473 family.

This Streptococcus agalactiae serotype Ia (strain ATCC 27591 / A909 / CDC SS700) protein is UPF0473 protein SAK_2028.